The following is a 4516-amino-acid chain: Dynein axonemal heavy chain 1 (4516 aa).

Residues 1-1748 (MVTLSISDTL…YIRAVNAEFI (1748 aa)) are stem. Positions 78-160 (SSGSDKSLKN…RKSPLAGTDK (83 aa)) are disordered. Basic and acidic residues-rich tracts occupy residues 83-97 (KSLK…KEEA) and 113-129 (ENHD…RNPE). AAA regions lie at residues 1749–1956 (YGYE…VISA), 2016–2249 (QAIR…TTVK), 2422–2682 (TMMP…VFQG), and 2780–2972 (DYNQ…CCTI). A GPAGTGKT motif motif is present at residues 1787-1794 (GPAGTGKT). 1787–1794 (GPAGTGKT) is an ATP binding site. The short motif at 1837 to 1843 (CFDEFNR) is the CFDEFNR motif element. ATP contacts are provided by residues 2054–2061 (GPTGSGKS), 2460–2467 (GPTGTGKT), and 2819–2826 (GVGGSGRS). Positions 2987 to 3285 (ATRFLHEIPE…MHKYHFVAKA (299 aa)) are stalk. Positions 3293 to 3394 (LREAQDDLEV…QDTVENLENM (102 aa)) form a coiled coil. 2 AAA regions span residues 3388 to 3618 (VENL…EERP) and 3831 to 4050 (LPAF…SYNS).

The protein belongs to the dynein heavy chain family. Consists of at least two heavy chains and a number of intermediate and light chains. In terms of tissue distribution, expressed in brain.

It is found in the cytoplasm. The protein localises to the cytoskeleton. The protein resides in the cilium axoneme. It localises to the cell projection. Its subcellular location is the cilium. It is found in the flagellum. Functionally, force generating protein of cilia required for sperm flagellum motility. Produces force towards the minus ends of microtubules. Dynein has ATPase activity; the force-producing power stroke is thought to occur on release of ADP. Required in spermatozoa for the formation of the inner dynein arms and biogenesis of the axoneme. This is Dynein axonemal heavy chain 1 from Rattus norvegicus (Rat).